A 286-amino-acid polypeptide reads, in one-letter code: Meiotically up-regulated gene 64 protein (286 aa).

The protein localises to the cytoplasm. In terms of biological role, has a role in meiosis. This is Meiotically up-regulated gene 64 protein (mug64) from Schizosaccharomyces pombe (strain 972 / ATCC 24843) (Fission yeast).